The following is a 296-amino-acid chain: Homoserine kinase (296 aa).

ATP is bound at residue Pro-92–Ala-102.

It belongs to the GHMP kinase family. Homoserine kinase subfamily.

The protein resides in the cytoplasm. The catalysed reaction is L-homoserine + ATP = O-phospho-L-homoserine + ADP + H(+). It participates in amino-acid biosynthesis; L-threonine biosynthesis; L-threonine from L-aspartate: step 4/5. In terms of biological role, catalyzes the ATP-dependent phosphorylation of L-homoserine to L-homoserine phosphate. The chain is Homoserine kinase from Cutibacterium acnes (strain DSM 16379 / KPA171202) (Propionibacterium acnes).